Here is a 1673-residue protein sequence, read N- to C-terminus: Protein TIC 214 (1673 aa).

The next 6 membrane-spanning stretches (helical) occupy residues 18 to 38 (IINSVVVVGLYYGFLTTFSIG), 67 to 87 (FITGQLIMFISIYYAPLHLAL), 90 to 110 (PHTITVLALPYLLFHFFCNTH), 127 to 147 (LSIQCVFLNNLIFQLFNHFIL), 175 to 195 (VGWIIGHIILMKSIGLLVVWI), and 218 to 238 (SMSIAGILNILLFVTCVYYLG).

It belongs to the TIC214 family. As to quaternary structure, part of the Tic complex.

It is found in the plastid. It localises to the chloroplast inner membrane. Involved in protein precursor import into chloroplasts. May be part of an intermediate translocation complex acting as a protein-conducting channel at the inner envelope. The protein is Protein TIC 214 of Lactuca sativa (Garden lettuce).